A 489-amino-acid polypeptide reads, in one-letter code: Para-nitrobenzyl esterase (489 aa).

Catalysis depends on Ser-189, which acts as the Acyl-ester intermediate. Ser-189 carries the post-translational modification Phosphoserine. Active-site charge relay system residues include Glu-310 and His-399.

Belongs to the type-B carboxylesterase/lipase family. In terms of assembly, monomer.

In terms of biological role, catalyzes hydrolysis of several beta-lactam antibiotic PNB esters to the corresponding free acid and PNB alcohol. This chain is Para-nitrobenzyl esterase (pnbA), found in Bacillus subtilis (strain 168).